Here is a 709-residue protein sequence, read N- to C-terminus: Disintegrin and metalloproteinase domain-containing protein 5 (709 aa).

Positions 1-98 (MKTPISSILK…TLSGFIHVIY (98 aa)) are excised as a propeptide. Topologically, residues 1–649 (MKTPISSILK…QQNRGIHPKQ (649 aa)) are extracellular. A Peptidase M12B domain is found at 141-334 (RYIKTDIVVD…QDLECLQDLP (194 aa)). Cystine bridges form between C247-C329, C289-C314, C291-C296, C406-C426, C585-C597, C591-C603, and C605-C614. Positions 346–434 (RRICGNGILE…YCVPDTFARN (89 aa)) constitute a Disintegrin domain. One can recognise an EGF-like; calcium-binding domain in the interval 581–615 (DFQQCNTSRDCNDHGVCNNFNHCHCDKGYNPPYCE). Residues 650-670 (QLQLILYITLPLIMIISAVFI) traverse the membrane as a helical segment. Over 671-709 (KQSKLSRLCGRERSEGTSCITEDSVSNTKMTTNEGSTLH) the chain is Cytoplasmic. Positions 690-709 (ITEDSVSNTKMTTNEGSTLH) are disordered.

Interacts with TEX101. As to expression, detected in testis.

It localises to the membrane. Functionally, this is a non catalytic metalloprotease-like protein. May play a role in sperm-egg fusion. This chain is Disintegrin and metalloproteinase domain-containing protein 5 (Adam5), found in Rattus norvegicus (Rat).